The following is a 595-amino-acid chain: Metacaspase-1 (595 aa).

Active-site residues include His-411 and Cys-466.

The protein belongs to the peptidase C14B family. Monomer.

Its activity is regulated as follows. Activated by Ca(2+). Cysteine protease that cleaves specifically after arginine or lysine residues. The protein is Metacaspase-1 of Plasmodium berghei (strain Anka).